Reading from the N-terminus, the 466-residue chain is Glutamate--tRNA ligase (466 aa).

The 'HIGH' region signature appears at 11 to 21 (PSPTGFIHLGN). The 'KMSKS' region signature appears at 243-247 (KMSKR). Position 246 (Lys246) interacts with ATP.

Belongs to the class-I aminoacyl-tRNA synthetase family. Glutamate--tRNA ligase type 1 subfamily. In terms of assembly, monomer.

The protein resides in the cytoplasm. The catalysed reaction is tRNA(Glu) + L-glutamate + ATP = L-glutamyl-tRNA(Glu) + AMP + diphosphate. In terms of biological role, catalyzes the attachment of glutamate to tRNA(Glu) in a two-step reaction: glutamate is first activated by ATP to form Glu-AMP and then transferred to the acceptor end of tRNA(Glu). The sequence is that of Glutamate--tRNA ligase from Cupriavidus necator (strain ATCC 17699 / DSM 428 / KCTC 22496 / NCIMB 10442 / H16 / Stanier 337) (Ralstonia eutropha).